We begin with the raw amino-acid sequence, 318 residues long: Cuticle collagen dpy-7 (318 aa).

Triple-helical region stretches follow at residues 101 to 130 (GPIG…DGLD), 147 to 206 (GPPG…PGDD), 209 to 235 (GGTG…NGLP), and 240 to 278 (GPPG…PGGH). Residues 101–318 (GPIGPPGVSG…GYSGGGYGKK (218 aa)) are disordered. Residues 187–204 (PQGEPGEQGEPGIKGPPG) show a composition bias toward low complexity. Pro residues-rich tracts occupy residues 216–228 (PPGP…PKGP) and 250–268 (PPGP…PFGP). The span at 309 to 318 (GYSGGGYGKK) shows a compositional bias: gly residues.

The protein belongs to the cuticular collagen family. In terms of assembly, collagen polypeptide chains are complexed within the cuticle by disulfide bonds and other types of covalent cross-links.

In terms of biological role, nematode cuticles are composed largely of collagen-like proteins. The cuticle functions both as an exoskeleton and as a barrier to protect the worm from its environment. Mutations in dpy-7 affects the body shape. This chain is Cuticle collagen dpy-7 (dpy-7), found in Caenorhabditis elegans.